Consider the following 447-residue polypeptide: Methyl-coenzyme M reductase II subunit beta (447 aa).

Residue tyrosine 368 participates in coenzyme M binding. Coenzyme B is bound at residue glycine 370.

This sequence belongs to the methyl-coenzyme M reductase beta subunit family. As to quaternary structure, MCR is a hexamer of two alpha, two beta, and two gamma chains, forming a dimer of heterotrimers. Requires coenzyme F430 as cofactor.

The enzyme catalyses coenzyme B + methyl-coenzyme M = methane + coenzyme M-coenzyme B heterodisulfide. It functions in the pathway one-carbon metabolism; methyl-coenzyme M reduction; methane from methyl-coenzyme M: step 1/1. Its function is as follows. Component of the methyl-coenzyme M reductase (MCR) I that catalyzes the reductive cleavage of methyl-coenzyme M (CoM-S-CH3 or 2-(methylthio)ethanesulfonate) using coenzyme B (CoB or 7-mercaptoheptanoylthreonine phosphate) as reductant which results in the production of methane and the mixed heterodisulfide of CoB and CoM (CoM-S-S-CoB). This is the final step in methanogenesis. This Methanocaldococcus jannaschii (strain ATCC 43067 / DSM 2661 / JAL-1 / JCM 10045 / NBRC 100440) (Methanococcus jannaschii) protein is Methyl-coenzyme M reductase II subunit beta (mrtB).